We begin with the raw amino-acid sequence, 158 residues long: Sorbin and SH3 domain-containing protein 2 (158 aa).

The SoHo domain maps to 1-46 (MRAATPLQTVDRPKDWYKTMFKQIHMVHKPDDDTDMYNTPYTYNAG). The disordered stretch occupies residues 28-158 (HKPDDDTDMY…TKPQAGRRKV (131 aa)). A compositionally biased stretch (polar residues) spans 50–66 (SPYSAQSHPAAKTQTYR). The span at 71–81 (SHSDNGTDAFK) shows a compositional bias: basic and acidic residues. S73 carries the post-translational modification Phosphoserine. A compositionally biased stretch (pro residues) spans 86–99 (PVPPPHVPPPVPPL). The segment covering 100-136 (RPRDRSSTEKHDWDPPDRKVDTRKFRSEPRSIFEYEP) has biased composition (basic and acidic residues). Alanine amide is present on A153.

Interacts with ABL1/c-Abl, ABL2/v-Abl/Arg, ACTN, AKT1, CBL, PALLD and PAK1. Interacts with ABL, CBL, DNM1, DNM2, FLOT1, AFDN, PTK2B/PYK2, SAPAP, SPTAN1, SYNJ1, SYNJ2, VCL/vinculin, and WASF. Interacts with PTPN12 and WASF1 via its SH3 domains; this interaction may mediate the partial PTPN12 and WASF1 translocation to focal adhesion sites. Ubiquitinated by CBL. Post-translationally, dephosphorylated by PTPN12. As to expression, expressed in duodenum.

It is found in the cytoplasm. It localises to the perinuclear region. The protein localises to the apical cell membrane. Its subcellular location is the cell junction. The protein resides in the focal adhesion. It is found in the cell projection. It localises to the lamellipodium. Functionally, adapter protein that plays a role in the assembling of signaling complexes, being a link between ABL kinases and actin cytoskeleton. Can form complex with ABL1 and CBL, thus promoting ubiquitination and degradation of ABL1 or with AKT1 and PAK1, thus mediating AKT1-mediated activation of PAK1. May play a role in the regulation of pancreatic cell adhesion, possibly by acting on WASF1 phosphorylation, enhancing phosphorylation by ABL1, as well as dephosphorylation by PTPN12. Increases water and sodium absorption in the intestine and gall-bladder. In Sus scrofa (Pig), this protein is Sorbin and SH3 domain-containing protein 2 (SORBS2).